We begin with the raw amino-acid sequence, 532 residues long: Egg peptide speract receptor (532 aa).

The signal sequence occupies residues 1 to 30 (MGLPMMLQQYCWAACLVICIAISSVDDVGA). The Extracellular portion of the chain corresponds to 31 to 491 (EQNYGREAVE…VVCEGSTAPP (461 aa)). SRCR domains are found at residues 43 to 144 (IRLI…VECL), 153 to 257 (LRMI…VVCK), 264 to 366 (IRLM…VVCA), and 382 to 485 (VRIV…VVCE). 12 disulfide bridges follow: Cys-68–Cys-133, Cys-81–Cys-143, Cys-112–Cys-122, Cys-178–Cys-244, Cys-191–Cys-256, Cys-223–Cys-233, Cys-289–Cys-355, Cys-302–Cys-365, Cys-335–Cys-345, Cys-406–Cys-475, Cys-419–Cys-484, and Cys-454–Cys-465. Asn-78 and Asn-115 each carry an N-linked (GlcNAc...) asparagine glycan. The N-linked (GlcNAc...) asparagine glycan is linked to Asn-459. The chain crosses the membrane as a helical span at residues 492 to 520 (SGMSIAVIGGAAGGGVAGLAVAAFAFYYI). The Cytoplasmic portion of the chain corresponds to 521–532 (KFVKPAGGGGQA).

Its subcellular location is the membrane. Receptor for the egg peptide speract. In Strongylocentrotus purpuratus (Purple sea urchin), this protein is Egg peptide speract receptor.